Consider the following 382-residue polypeptide: Methenyltetrahydrofolate synthase domain-containing protein (382 aa).

Residues Thr306–Met382 enclose the RRM domain.

This Danio rerio (Zebrafish) protein is Methenyltetrahydrofolate synthase domain-containing protein (mthfsd).